Reading from the N-terminus, the 1054-residue chain is Desmoglein-1 (1054 aa).

A signal peptide spans Met1–Ser23. A propeptide spanning residues Glu24–Arg49 is cleaved from the precursor. Asn36, Asn110, and Asn180 each carry an N-linked (GlcNAc...) asparagine glycan. 4 consecutive Cadherin domains span residues Glu50–Phe157, Ser158–Met269, Glu270–Ser389, and Arg386–Glu493. Residues Glu50 to Pro566 are Extracellular-facing. Residues Gly487 to Gly554 form a disordered region. A compositionally biased stretch (low complexity) spans Thr496 to Asp507. Residues Ser508 to Arg517 are compositionally biased toward gly residues. Positions Gly523–Ser534 are enriched in low complexity. Positions Thr542–Gly554 are enriched in polar residues. N-linked (GlcNAc...) asparagine glycosylation is present at Asn557. Residues Ala567–Met587 traverse the membrane as a helical segment. At Cys588–Lys1054 the chain is on the cytoplasmic side. Desmoglein repeat repeat units follow at residues Thr830–Glu856, Ser857–Val886, Gly887–Ile916, Ala917–Ile944, and Arg945–Val973. The disordered stretch occupies residues Gly1018–Ala1040. Residues Ser1029 to Ala1040 are compositionally biased toward polar residues.

As to quaternary structure, binds to JUP/plakoglobin. Interacts with PKP2. Interacts with DSC3; there is evidence to suggest that the interaction promotes cell-cell adhesion of keratinocytes.

It is found in the cell membrane. It localises to the cell junction. Its subcellular location is the desmosome. The protein resides in the cytoplasm. The protein localises to the nucleus. In terms of biological role, component of intercellular desmosome junctions. Involved in the interaction of plaque proteins and intermediate filaments mediating cell-cell adhesion. The polypeptide is Desmoglein-1 (DSG1) (Canis lupus familiaris (Dog)).